The following is a 920-amino-acid chain: Protein O-mannosyl-transferase TMTC3 (920 aa).

Residues 1 to 14 (MLEGKMADINFKEV) are Cytoplasmic-facing. A helical transmembrane segment spans residues 15–35 (TLIVSVVAACYWNSLFCGFVF). The Extracellular portion of the chain corresponds to 36 to 94 (DDVSAILDNKDLHPSTPLKTLFQNDFWGTPMSEERSHKSYRPLTVLTFRLNYLLSELKP). A helical membrane pass occupies residues 95–115 (MSYHLLNTVFHAVVSVIFLKV). Residues 116 to 125 (CRLFLDKRSS) lie on the Cytoplasmic side of the membrane. The next 2 helical transmembrane spans lie at 126–144 (MIAA…AVTG) and 145–163 (VVGR…AFLS). Over 164 to 171 (YTKSKGPD) the chain is Cytoplasmic. A helical transmembrane segment spans residues 172–192 (NSIVWTPIVLTVFLVAVATLC). The Extracellular segment spans residues 193-198 (KEQGIT). Residues 199–219 (VVGICCVYEVFVAQGYTLPML) form a helical membrane-spanning segment. The Cytoplasmic portion of the chain corresponds to 220–236 (CTVAGQFLRGKGSIPLS). A helical transmembrane segment spans residues 237-257 (MLQTLVKLIVLMLSTLLLVVV). Residues 258–325 (RVQVIQSQLP…LIESFLDVRN (68 aa)) are Extracellular-facing. The chain crosses the membrane as a helical span at residues 326–346 (LATFAFFCFLGALGIFSLRYP). The Cytoplasmic portion of the chain corresponds to 347 to 358 (GDSSKTVLMALC). A helical membrane pass occupies residues 359 to 379 (LMALPFIPASNLFFPVGFVVA). Over 380–381 (ER) the chain is Extracellular. The chain crosses the membrane as a helical span at residues 382 to 402 (VLYVPSMGFCILVAHGWQKIS). The Cytoplasmic segment spans residues 403-409 (NKSVLKK). Residues 410–428 (LSWVCLSMVILTHALKTLH) form a helical membrane-spanning segment. Topologically, residues 429–920 (RNWDWESEYT…EEIERILNGE (492 aa)) are extracellular. TPR repeat units follow at residues 451–484 (AKLW…QPDD), 485–518 (IGAH…MPQI), 534–567 (NVYI…RPDF), 568–601 (KQAY…DRNN), 602–635 (ADLW…NPKH), 673–706 (ANGY…QPDF), 707–740 (RSAL…YPDH), 742–775 (KGLI…DPSN), and 776–809 (VQGK…APHE). The N-linked (GlcNAc...) asparagine glycan is linked to asparagine 499. Tyrosine 508 carries the phosphotyrosine modification. N-linked (GlcNAc...) asparagine glycosylation occurs at asparagine 546. Residues 829 to 897 (VEQPLAPADK…APHKTTKDIK (69 aa)) are disordered. Basic and acidic residues predominate over residues 840–858 (PGTEEREEIPSEDVKEISS). The segment covering 867–880 (KTNNNRNSKSNKQS) has biased composition (low complexity). A compositionally biased stretch (basic and acidic residues) spans 887–897 (DAPHKTTKDIK).

It belongs to the TMTC family.

The protein resides in the membrane. The protein localises to the endoplasmic reticulum. It carries out the reaction a di-trans,poly-cis-dolichyl beta-D-mannosyl phosphate + L-seryl-[protein] = 3-O-(alpha-D-mannosyl)-L-seryl-[protein] + a di-trans,poly-cis-dolichyl phosphate + H(+). The enzyme catalyses a di-trans,poly-cis-dolichyl beta-D-mannosyl phosphate + L-threonyl-[protein] = 3-O-(alpha-D-mannosyl)-L-threonyl-[protein] + a di-trans,poly-cis-dolichyl phosphate + H(+). It functions in the pathway protein modification; protein glycosylation. In terms of biological role, transfers mannosyl residues to the hydroxyl group of serine or threonine residues. The 4 members of the TMTC family are O-mannosyl-transferases dedicated primarily to the cadherin superfamily, each member seems to have a distinct role in decorating the cadherin domains with O-linked mannose glycans at specific regions. Also acts as O-mannosyl-transferase on other proteins such as PDIA3. Involved in the positive regulation of proteasomal protein degradation in the endoplasmic reticulum (ER), and the control of ER stress response. This Mus musculus (Mouse) protein is Protein O-mannosyl-transferase TMTC3.